Reading from the N-terminus, the 514-residue chain is Photosystem II CP47 reaction center protein (514 aa).

6 consecutive transmembrane segments (helical) span residues 21-36 (AVHL…WAGS), 109-123 (IVLS…VWHW), 148-164 (GGHL…FGTF), 211-226 (IAAG…FHLT), 245-260 (ALAS…AFVV), and 465-480 (CFAL…HGAR).

The protein belongs to the PsbB/PsbC family. PsbB subfamily. In terms of assembly, PSII is composed of 1 copy each of membrane proteins PsbA, PsbB, PsbC, PsbD, PsbE, PsbF, PsbH, PsbI, PsbJ, PsbK, PsbL, PsbM, PsbT, PsbX, PsbY, PsbZ, Psb30/Ycf12, peripheral proteins PsbO, CyanoQ (PsbQ), PsbU, PsbV and a large number of cofactors. It forms dimeric complexes. Requires Binds multiple chlorophylls. PSII binds additional chlorophylls, carotenoids and specific lipids. as cofactor.

It localises to the cellular thylakoid membrane. In terms of biological role, one of the components of the core complex of photosystem II (PSII). It binds chlorophyll and helps catalyze the primary light-induced photochemical processes of PSII. PSII is a light-driven water:plastoquinone oxidoreductase, using light energy to abstract electrons from H(2)O, generating O(2) and a proton gradient subsequently used for ATP formation. In Prochlorothrix hollandica, this protein is Photosystem II CP47 reaction center protein.